The following is a 509-amino-acid chain: Bestrophin-2a (509 aa).

At 1 to 31 (MTVTYTARVANARFGGFSQLLLLWRGSIYKL) the chain is on the cytoplasmic side. Residue Ala10 coordinates Ca(2+). Residues 32-51 (LWRELLCFLGFYMALSAAYR) form a helical membrane-spanning segment. The Extracellular segment spans residues 52 to 60 (FVLTEGQKR). Residues 61–82 (YFEKLVIYCDQYASLIPVSFVL) form a helical membrane-spanning segment. Over 83-238 (GFYVTLVVNR…WISVPLVYTQ (156 aa)) the chain is Cytoplasmic. A helical membrane pass occupies residues 239 to 255 (VVTIALYSYFLACLIGR). Residues 256-274 (QFLDPAQGYKDHDLDLCVP) lie on the Extracellular side of the membrane. Residues 275 to 288 (IFTLLQFFFYAGWL) traverse the membrane as a helical segment. The Cytoplasmic portion of the chain corresponds to 289–509 (KVAEQLINPF…PIGEEEENLA (221 aa)). 4 residues coordinate Ca(2+): Gln293, Asn296, Asp301, and Asp304. The disordered stretch occupies residues 454–509 (DPGLPEPEAPPPAGPEPLTLIPGPVEPFSIVTMPGPRGPAPPWLPSPIGEEEENLA). Pro residues-rich tracts occupy residues 457–468 (LPEPEAPPPAGP) and 489–498 (PRGPAPPWLP).

This sequence belongs to the anion channel-forming bestrophin (TC 1.A.46) family. Calcium-sensitive chloride channel subfamily. In terms of assembly, pentamer. Interacts with GLUL; this interaction tethers a fraction of GLUL to the membrane, causing a decrease of cytosolic glutamine synthase (GS) activity and inhibits the chloride channel activity of BEST2 by affecting the gating at the aperture in the absence of intracellular glutamate. As to expression, mainly confined to the retinal pigment epithelium. Expressed in colon.

The protein resides in the cell membrane. It is found in the basolateral cell membrane. It carries out the reaction chloride(in) = chloride(out). The enzyme catalyses hydrogencarbonate(in) = hydrogencarbonate(out). The catalysed reaction is L-glutamate(out) = L-glutamate(in). It catalyses the reaction iodide(out) = iodide(in). It carries out the reaction L-glutamine(out) = L-glutamine(in). Chloride channel activity is allosterically inhibited by GLUL/glutamine synthase (GS) which affects the gating at the aperture in the absence of intracellular glutamate. Inhibitory effect of GLUL is relieved upon increasing of L-glutamate intracellular level. In terms of biological role, ligand-gated anion channel that allows the movement of anions across cell membranes when activated by calcium (Ca2+). Transports a large specter of anions, namely mediates the movement of chloride, L-glutamate and iodide. Calcium-binding triggers the dilation of the aperture, but calcium-dependent gating is only effective when the size of the passing anion is bigger than the closed aperture. Mediates the calcium-activated hydrogencarbonate movement and participates in colonic hydrogencarbonate secretion concomitant with mucin secretion. In non-pigmented epithelium (NPE), mediates the efflux of intracellular L-glutamate; binding of intracellular L-glutamate activates and open both the neck and the aperture of the channel, leading to L-glutamate exit promoting chloride influx movement from the extracellular side in trans. Also exhibits a directional permeability for intracellular glutamine, in a similar manner as for L-glutamate. This chain is Bestrophin-2a, found in Homo sapiens (Human).